A 98-amino-acid chain; its full sequence is NADH-ubiquinone oxidoreductase chain 4L (98 aa).

A run of 3 helical transmembrane segments spans residues 1–21 (MSMV…GLLM), 29–49 (SLLC…MTIL), and 61–81 (IILL…LVMV).

It belongs to the complex I subunit 4L family. In terms of assembly, core subunit of respiratory chain NADH dehydrogenase (Complex I) which is composed of 45 different subunits.

It is found in the mitochondrion inner membrane. It carries out the reaction a ubiquinone + NADH + 5 H(+)(in) = a ubiquinol + NAD(+) + 4 H(+)(out). Its function is as follows. Core subunit of the mitochondrial membrane respiratory chain NADH dehydrogenase (Complex I) which catalyzes electron transfer from NADH through the respiratory chain, using ubiquinone as an electron acceptor. Part of the enzyme membrane arm which is embedded in the lipid bilayer and involved in proton translocation. The sequence is that of NADH-ubiquinone oxidoreductase chain 4L (MT-ND4L) from Arctocephalus australis (South American fur seal).